A 251-amino-acid polypeptide reads, in one-letter code: Phosphate import ATP-binding protein PstB (251 aa).

The region spanning 5–246 is the ABC transporter domain; it reads MNSKDVNFWY…PENKKTEDYI (242 aa). Position 37 to 44 (37 to 44) interacts with ATP; that stretch reads GPSGCGKS.

Belongs to the ABC transporter superfamily. Phosphate importer (TC 3.A.1.7) family. The complex is composed of two ATP-binding proteins (PstB), two transmembrane proteins (PstC and PstA) and a solute-binding protein (PstS).

It is found in the cell membrane. It carries out the reaction phosphate(out) + ATP + H2O = ADP + 2 phosphate(in) + H(+). In terms of biological role, part of the ABC transporter complex PstSACB involved in phosphate import. Responsible for energy coupling to the transport system. The sequence is that of Phosphate import ATP-binding protein PstB from Methanococcus maripaludis (strain DSM 14266 / JCM 13030 / NBRC 101832 / S2 / LL).